Here is a 202-residue protein sequence, read N- to C-terminus: Ig delta chain C region (202 aa).

Positions 32–58 (KSKTFKLPETRNSQSSKKANPTPQAKN) are disordered. Polar residues predominate over residues 41–56 (TRNSQSSKKANPTPQA). The Ig-like domain maps to 66–178 (PTATKNIVGA…TKLNASKSLE (113 aa)).

The sequence is that of Ig delta chain C region from Rattus norvegicus (Rat).